We begin with the raw amino-acid sequence, 96 residues long: UPF0729 protein AGAP000931 (96 aa).

The disordered stretch occupies residues 65-96; it reads VPPGHDPVGPTVAADTATSDAVDDAASSKKTL. The segment covering 75–96 has biased composition (low complexity); sequence TVAADTATSDAVDDAASSKKTL.

This sequence belongs to the UPF0729 family.

The polypeptide is UPF0729 protein AGAP000931 (Anopheles gambiae (African malaria mosquito)).